The chain runs to 206 residues: Pyridoxal 5'-phosphate synthase subunit PdxT (206 aa).

Residue 59–61 (GES) participates in L-glutamine binding. The active-site Nucleophile is the Cys-91. Residues Arg-123 and 151 to 152 (IR) contribute to the L-glutamine site. Catalysis depends on charge relay system residues His-187 and Glu-189.

The protein belongs to the glutaminase PdxT/SNO family. In the presence of PdxS, forms a dodecamer of heterodimers. Only shows activity in the heterodimer.

The catalysed reaction is aldehydo-D-ribose 5-phosphate + D-glyceraldehyde 3-phosphate + L-glutamine = pyridoxal 5'-phosphate + L-glutamate + phosphate + 3 H2O + H(+). The enzyme catalyses L-glutamine + H2O = L-glutamate + NH4(+). It functions in the pathway cofactor biosynthesis; pyridoxal 5'-phosphate biosynthesis. Its function is as follows. Catalyzes the hydrolysis of glutamine to glutamate and ammonia as part of the biosynthesis of pyridoxal 5'-phosphate. The resulting ammonia molecule is channeled to the active site of PdxS. In Mycobacterium sp. (strain KMS), this protein is Pyridoxal 5'-phosphate synthase subunit PdxT.